The following is a 110-amino-acid chain: Transmembrane protein 233 (110 aa).

Residues 1–32 (MSQYASRSDSKGALDSSSPEAYTEDDKTEEDI) form a disordered region. At 1 to 42 (MSQYASRSDSKGALDSSSPEAYTEDDKTEEDIPAPSNYLWLT) the chain is on the cytoplasmic side. Positions 22 to 32 (YTEDDKTEEDI) are enriched in acidic residues. The helical intramembrane region spans 43–63 (IISCFCPAYPVNIVALVFSIM). Over 64–85 (SLNSYNDGDYEGARRLGRNAKW) the chain is Cytoplasmic. A helical transmembrane segment spans residues 86–106 (VAIASIIIGLVIIGVSCAVHF). Residues 107–110 (SRNP) are Extracellular-facing.

It belongs to the CD225/Dispanin family. Interacts with the giant stinging tree toxin ExTxA (P0DQP3). Interacts with Nav1.7/SCN9A. Interacts with Nav1.1/SCN1A, Nav1.2/SCN2A, Nav1.3/SCN3A, Nav1.4/SCN4A, Nav1.5/SCN5A, and Nav1.6/SCN8A. As to expression, probably expressed in nociceptive neurons. Detected in dorsal root ganglion neurons.

The protein localises to the membrane. In terms of biological role, probable accessory protein of voltage-gated sodium channels. This chain is Transmembrane protein 233, found in Mus musculus (Mouse).